The following is a 661-amino-acid chain: UvrABC system protein B (661 aa).

A Helicase ATP-binding domain is found at 25 to 182 (AGLSSKKRSQ…NDLINLQYER (158 aa)). 38-45 (GITGSGKT) contributes to the ATP binding site. Residues 91–114 (YYDYYQPEAYIARTDTFIEKDSSI) carry the Beta-hairpin motif. A Helicase C-terminal domain is found at 430-592 (QVEDLISEIQ…IIPKTINRAI (163 aa)). A UVR domain is found at 621–656 (KTHIDKLKKEMLKAASNLEFEQAVKLRDQLKTLEEA).

The protein belongs to the UvrB family. Forms a heterotetramer with UvrA during the search for lesions. Interacts with UvrC in an incision complex.

It localises to the cytoplasm. The UvrABC repair system catalyzes the recognition and processing of DNA lesions. A damage recognition complex composed of 2 UvrA and 2 UvrB subunits scans DNA for abnormalities. Upon binding of the UvrA(2)B(2) complex to a putative damaged site, the DNA wraps around one UvrB monomer. DNA wrap is dependent on ATP binding by UvrB and probably causes local melting of the DNA helix, facilitating insertion of UvrB beta-hairpin between the DNA strands. Then UvrB probes one DNA strand for the presence of a lesion. If a lesion is found the UvrA subunits dissociate and the UvrB-DNA preincision complex is formed. This complex is subsequently bound by UvrC and the second UvrB is released. If no lesion is found, the DNA wraps around the other UvrB subunit that will check the other stand for damage. The sequence is that of UvrABC system protein B from Rickettsia rickettsii (strain Sheila Smith).